Reading from the N-terminus, the 503-residue chain is Aromatase (503 aa).

A heme-binding site is contributed by cysteine 437.

It belongs to the cytochrome P450 family. The cofactor is heme.

It is found in the membrane. The catalysed reaction is testosterone + 3 reduced [NADPH--hemoprotein reductase] + 3 O2 = 17beta-estradiol + formate + 3 oxidized [NADPH--hemoprotein reductase] + 4 H2O + 4 H(+). The enzyme catalyses androst-4-ene-3,17-dione + 3 reduced [NADPH--hemoprotein reductase] + 3 O2 = estrone + formate + 3 oxidized [NADPH--hemoprotein reductase] + 4 H2O + 4 H(+). In terms of biological role, catalyzes the formation of aromatic C18 estrogens from C19 androgens. This is Aromatase (CYP19A1) from Oryctolagus cuniculus (Rabbit).